Here is a 361-residue protein sequence, read N- to C-terminus: Tyrosine--tRNA ligase (361 aa).

5 residues coordinate L-tyrosine: Y36, Y162, Q166, D169, and Q184. Positions 236 to 240 (KMSKS) match the 'KMSKS' region motif. K239 contributes to the ATP binding site.

The protein belongs to the class-I aminoacyl-tRNA synthetase family. TyrS type 4 subfamily. As to quaternary structure, homodimer.

It is found in the cytoplasm. It catalyses the reaction tRNA(Tyr) + L-tyrosine + ATP = L-tyrosyl-tRNA(Tyr) + AMP + diphosphate + H(+). In terms of biological role, catalyzes the attachment of tyrosine to tRNA(Tyr) in a two-step reaction: tyrosine is first activated by ATP to form Tyr-AMP and then transferred to the acceptor end of tRNA(Tyr). The sequence is that of Tyrosine--tRNA ligase from Saccharolobus islandicus (strain Y.N.15.51 / Yellowstone #2) (Sulfolobus islandicus).